A 61-amino-acid chain; its full sequence is Potassium channel toxin alpha-KTx 3.18 (61 aa).

The N-terminal stretch at 1-23 (MKMFFTVLVTLFVCSMIIGICEG) is a signal peptide. Intrachain disulfides connect cysteine 30-cysteine 50, cysteine 36-cysteine 55, and cysteine 40-cysteine 57. Lysine 60 carries the post-translational modification Lysine amide.

As to expression, expressed by the venom gland.

The protein resides in the secreted. In terms of biological role, inhibits voltage-gated potassium channel rKv1.1/KCNA1 at nanomolar ranges (IC(50)=90 +-2 nM, reduction of current by 30% at 50 nM or toxin). The protein is Potassium channel toxin alpha-KTx 3.18 of Mesobuthus eupeus (Lesser Asian scorpion).